The following is a 310-amino-acid chain: Cell division protein FtsQ (310 aa).

The segment at 1-57 is disordered; sequence MSEPENTAEDKDAEAAISADAVESETTADGGENPAEGESAEGPRMRARRERMERREA. Over 1–95 the chain is Cytoplasmic; the sequence is MSEPENTAED…AGRGKVQGLQ (95 aa). The chain crosses the membrane as a helical span at residues 96-116; the sequence is TLLLVVLLALIAVGLGSILYF. The Extracellular segment spans residues 117–310; it reads TPLMSVRQTV…VSSPDLPTVK (194 aa). Positions 120 to 188 constitute a POTRA domain; it reads MSVRQTVVTG…STLRVTIVER (69 aa).

This sequence belongs to the FtsQ/DivIB family. FtsQ subfamily.

The protein localises to the cell membrane. In terms of biological role, essential cell division protein. This is Cell division protein FtsQ from Mycobacteroides abscessus (strain ATCC 19977 / DSM 44196 / CCUG 20993 / CIP 104536 / JCM 13569 / NCTC 13031 / TMC 1543 / L948) (Mycobacterium abscessus).